The primary structure comprises 586 residues: Switch-associated protein 70 (586 aa).

Residues 210 to 306 enclose the PH domain; sequence DVLKQGYMLK…WIQAIQTTVS (97 aa). Residues 316-538 adopt a coiled-coil conformation; sequence HKEARQKRKE…NNTRSWKDKV (223 aa).

In terms of assembly, the SWAP complex consists of NPM1, NCL, PARP1 and SWAP70. Post-translationally, tyrosine-phosphorylated.

It localises to the cytoplasm. The protein resides in the cell membrane. The protein localises to the nucleus. It is found in the cell projection. Its subcellular location is the lamellipodium. In terms of biological role, phosphatidylinositol 3,4,5-trisphosphate-dependent guanine nucleotide exchange factor (GEF) which, independently of RAS, transduces signals from tyrosine kinase receptors to RAC. It also mediates signaling of membrane ruffling. Regulates the actin cytoskeleton as an effector or adapter protein in response to agonist stimulated phosphatidylinositol (3,4)-bisphosphate production and cell protrusion. The chain is Switch-associated protein 70 (SWAP70) from Gallus gallus (Chicken).